Here is a 517-residue protein sequence, read N- to C-terminus: zeta-carotene-forming phytoene desaturase (517 aa).

11 to 44 (VVVGAGVGGLAAAARLAHQGFDVQVFEKTQGPGG) is a binding site for FAD.

This sequence belongs to the carotenoid/retinoid oxidoreductase family. It depends on FAD as a cofactor.

The catalysed reaction is 15-cis-phytoene + 2 A = all-trans-zeta-carotene + 2 AH2. Its pathway is carotenoid biosynthesis; lycopene biosynthesis. Its function is as follows. Dehydrogenates carotenes in the cis conformation: has cis-to-trans isomerase activity and mediates dehydrogenation of cis-phytoene, producing zeta-carotene via the intermediary of phytofluene by the symmetrical introduction of 2 double bonds at the C-11 and C-11' positions of phytoene. The polypeptide is zeta-carotene-forming phytoene desaturase (carA2) (Myxococcus xanthus).